Consider the following 438-residue polypeptide: Glutamyl-tRNA reductase (438 aa).

Substrate contacts are provided by residues 49–52, serine 109, 114–116, and glutamine 120; these read TCNR and EGQ. Cysteine 50 serves as the catalytic Nucleophile. 198–203 is a binding site for NADP(+); it reads GAGRMS.

The protein belongs to the glutamyl-tRNA reductase family. Homodimer.

The enzyme catalyses (S)-4-amino-5-oxopentanoate + tRNA(Glu) + NADP(+) = L-glutamyl-tRNA(Glu) + NADPH + H(+). It participates in porphyrin-containing compound metabolism; protoporphyrin-IX biosynthesis; 5-aminolevulinate from L-glutamyl-tRNA(Glu): step 1/2. It functions in the pathway porphyrin-containing compound metabolism; chlorophyll biosynthesis. Catalyzes the NADPH-dependent reduction of glutamyl-tRNA(Glu) to glutamate 1-semialdehyde (GSA). This chain is Glutamyl-tRNA reductase, found in Synechococcus sp. (strain WH7803).